Consider the following 470-residue polypeptide: UDP-N-acetylmuramoylalanine--D-glutamate ligase (470 aa).

Position 124–130 (124–130) interacts with ATP; that stretch reads GTNGKTT.

This sequence belongs to the MurCDEF family.

Its subcellular location is the cytoplasm. The enzyme catalyses UDP-N-acetyl-alpha-D-muramoyl-L-alanine + D-glutamate + ATP = UDP-N-acetyl-alpha-D-muramoyl-L-alanyl-D-glutamate + ADP + phosphate + H(+). It functions in the pathway cell wall biogenesis; peptidoglycan biosynthesis. In terms of biological role, cell wall formation. Catalyzes the addition of glutamate to the nucleotide precursor UDP-N-acetylmuramoyl-L-alanine (UMA). This is UDP-N-acetylmuramoylalanine--D-glutamate ligase from Prochlorococcus marinus (strain SARG / CCMP1375 / SS120).